The following is a 259-amino-acid chain: Dihydroorotate dehydrogenase B (NAD(+)), electron transfer subunit (259 aa).

The region spanning 2–102 (MQKQNMIVVN…LGPLGHGFPV (101 aa)) is the FAD-binding FR-type domain. FAD is bound by residues 53-56 (RPIS), 70-72 (LYR), and 77-78 (GT). Residues cysteine 221, cysteine 226, cysteine 229, and cysteine 246 each coordinate [2Fe-2S] cluster.

It belongs to the PyrK family. In terms of assembly, heterotetramer of 2 PyrK and 2 PyrD type B subunits. Requires [2Fe-2S] cluster as cofactor. It depends on FAD as a cofactor.

It functions in the pathway pyrimidine metabolism; UMP biosynthesis via de novo pathway; orotate from (S)-dihydroorotate (NAD(+) route): step 1/1. Functionally, responsible for channeling the electrons from the oxidation of dihydroorotate from the FMN redox center in the PyrD type B subunit to the ultimate electron acceptor NAD(+). In Bacillus mycoides (strain KBAB4) (Bacillus weihenstephanensis), this protein is Dihydroorotate dehydrogenase B (NAD(+)), electron transfer subunit.